We begin with the raw amino-acid sequence, 337 residues long: tRNA N6-adenosine threonylcarbamoyltransferase (337 aa).

Positions 111 and 115 each coordinate Fe cation. Substrate-binding positions include 134–138, aspartate 167, glycine 180, and asparagine 272; that span reads LVSGG. Aspartate 300 contacts Fe cation.

It belongs to the KAE1 / TsaD family. The cofactor is Fe(2+).

The protein resides in the cytoplasm. It carries out the reaction L-threonylcarbamoyladenylate + adenosine(37) in tRNA = N(6)-L-threonylcarbamoyladenosine(37) in tRNA + AMP + H(+). Required for the formation of a threonylcarbamoyl group on adenosine at position 37 (t(6)A37) in tRNAs that read codons beginning with adenine. Is involved in the transfer of the threonylcarbamoyl moiety of threonylcarbamoyl-AMP (TC-AMP) to the N6 group of A37, together with TsaE and TsaB. TsaD likely plays a direct catalytic role in this reaction. In Erwinia tasmaniensis (strain DSM 17950 / CFBP 7177 / CIP 109463 / NCPPB 4357 / Et1/99), this protein is tRNA N6-adenosine threonylcarbamoyltransferase.